The chain runs to 350 residues: Autophagy-related protein 3 (350 aa).

A flexible region region spans residues 85 to 166 (NFAGDAGLEE…EEDDEAIIRD (82 aa)). The tract at residues 97 to 171 (VDDGDEFKGS…AIIRDTDASG (75 aa)) is disordered. Positions 102–113 (EFKGSKGDDDGW) are enriched in basic and acidic residues. Residues 146–161 (DDDDDIPDMEDEEDDE) are compositionally biased toward acidic residues. The active-site Glycyl thioester intermediate is the Cys-244. Residues 248 to 326 (PVMKTLLDRA…DQEVAIRVDQ (79 aa)) are handle region. Lys-262 and Lys-267 each carry N6-acetyllysine.

The protein belongs to the ATG3 family. As to quaternary structure, monomer. Interacts with ATG8 through an intermediate thioester bond through the C-terminal Gly of ATG8. Also interacts with the 40 amino acid C-terminal region of the E1-like ATG7 enzyme. Also interacts with the ATG12-ATG5 conjugate. Interacts with HAT1. In terms of processing, acetylated by HAT1 at Lys-262 and Lys-267, which affects the interaction with ATG8 and prevents autophagy during both appressorium development and nutrient starvation.

Its subcellular location is the preautophagosomal structure. The protein localises to the cytoplasm. In terms of biological role, E2 conjugating enzyme required for the cytoplasm to vacuole transport (Cvt) and autophagy. Required for selective autophagic degradation of the nucleus (nucleophagy) as well as for mitophagy which contributes to regulate mitochondrial quantity and quality by eliminating the mitochondria to a basal level to fulfill cellular energy requirements and preventing excess ROS production. Responsible for the E2-like covalent binding of phosphatidylethanolamine to the C-terminal Gly of ATG8. The ATG12-ATG5 conjugate plays a role of an E3 and promotes the transfer of ATG8 from ATG3 to phosphatidylethanolamine (PE). This step is required for the membrane association of ATG8. The formation of the ATG8-phosphatidylethanolamine conjugate is essential for autophagy and for the cytoplasm to vacuole transport (Cvt). The ATG8-PE conjugate mediates tethering between adjacent membranes and stimulates membrane hemifusion, leading to expansion of the autophagosomal membrane during autophagy. Plays a role in appressorium formation and pathogenicity. The polypeptide is Autophagy-related protein 3 (Pyricularia oryzae (strain 70-15 / ATCC MYA-4617 / FGSC 8958) (Rice blast fungus)).